Reading from the N-terminus, the 557-residue chain is Pectinesterase/pectinesterase inhibitor 18 (557 aa).

A signal peptide spans 1–34 (MSNSNQPLLSKPKSLKHKNLCLVLSFVAILGSVA). A pectinesterase inhibitor 18 region spans residues 47–203 (NNDDSLLTTS…VSRARVALAI (157 aa)). Residues 246-543 (NVVVAKDGTG…FTVAKLIQGG (298 aa)) are pectinesterase 18. Substrate is bound by residues T321 and Q351. D374 serves as the catalytic Proton donor; for pectinesterase activity. The active-site Nucleophile; for pectinesterase activity is the D395. The substrate site is built by R463 and W465.

In the N-terminal section; belongs to the PMEI family. It in the C-terminal section; belongs to the pectinesterase family. In terms of tissue distribution, expressed in siliques, flowers, floral stems, rosette leaves and roots.

The protein resides in the secreted. Its subcellular location is the cell wall. It carries out the reaction [(1-&gt;4)-alpha-D-galacturonosyl methyl ester](n) + n H2O = [(1-&gt;4)-alpha-D-galacturonosyl](n) + n methanol + n H(+). It catalyses the reaction Endohydrolysis of the N-glycosidic bond at one specific adenosine on the 28S rRNA.. It functions in the pathway glycan metabolism; pectin degradation; 2-dehydro-3-deoxy-D-gluconate from pectin: step 1/5. Functionally, acts in the modification of cell walls via demethylesterification of cell wall pectin. Inhibits the elongation phase of protein synthesis. The protein is Pectinesterase/pectinesterase inhibitor 18 (PME18) of Arabidopsis thaliana (Mouse-ear cress).